The following is a 297-amino-acid chain: MQHIQDNDKLYRYLFQHRAVRGEWVRLNETFSQTLNTHQYPKAVQHLLGEMLVATSLLTAIMKFEGNITVQIQGDGPLKLAVVNGNEKQQLRALARVQAEIDDQASLAEMVGNGVLVISIIPTEGERYQGVIQLDKPTIRECLEDYFIRSEQLQTHLIIRVGEYAGQAVAAGMLLQIMPDGTGTPEDFEHLMTLAETVKDEELFGLTAEALLYRLFHQEQVEVYPAQTTAFKCGCSRERSGQAMLLLPMAEIEEMLAEKKGVIDMQCECCGTQYFFDKPAIMLLKEEAAKLADLGLT.

Intrachain disulfides connect Cys233–Cys235 and Cys267–Cys270.

This sequence belongs to the HSP33 family. Under oxidizing conditions two disulfide bonds are formed involving the reactive cysteines. Under reducing conditions zinc is bound to the reactive cysteines and the protein is inactive.

Its subcellular location is the cytoplasm. In terms of biological role, redox regulated molecular chaperone. Protects both thermally unfolding and oxidatively damaged proteins from irreversible aggregation. Plays an important role in the bacterial defense system toward oxidative stress. This Haemophilus ducreyi (strain 35000HP / ATCC 700724) protein is 33 kDa chaperonin.